The following is a 214-amino-acid chain: Coiled-coil domain-containing protein 169 (214 aa).

Positions 29–154 form a coiled coil; sequence DAVQLSIFEL…NERRTYLAEM (126 aa). Positions 155-170 are enriched in polar residues; sequence SQGSGLHQVSKRQQVD. The segment at 155 to 214 is disordered; it reads SQGSGLHQVSKRQQVDQLPRMQENLVKTGRYNPAKQKTVSAKRGPVKKITRPNHLPELHP.

It belongs to the CCDC169 family.

The protein is Coiled-coil domain-containing protein 169 (CCDC169) of Homo sapiens (Human).